The following is a 177-amino-acid chain: Thymidine kinase (177 aa).

Residue 11-18 (GPMFSGKS) coordinates ATP. Glu83 acts as the Proton acceptor in catalysis. Phe113 is a substrate binding site. 2 residues coordinate Zn(2+): Cys138 and Cys141. Residue 157–161 (IELIG) coordinates substrate. Zn(2+) is bound by residues Cys170 and Cys173.

Belongs to the thymidine kinase family.

The enzyme catalyses thymidine + ATP = dTMP + ADP + H(+). In Sheeppox virus (strain KS-1) (SPPV), this protein is Thymidine kinase (TK).